A 262-amino-acid chain; its full sequence is Proteasome subunit alpha (262 aa).

Positions 235–262 (LLPTTGESDAGDSGADGSPSGDSPDTSA) are disordered.

This sequence belongs to the peptidase T1A family. The 20S proteasome core is composed of 14 alpha and 14 beta subunits that assemble into four stacked heptameric rings, resulting in a barrel-shaped structure. The two inner rings, each composed of seven catalytic beta subunits, are sandwiched by two outer rings, each composed of seven alpha subunits. The catalytic chamber with the active sites is on the inside of the barrel. Has a gated structure, the ends of the cylinder being occluded by the N-termini of the alpha-subunits. Is capped by the proteasome-associated ATPase, ARC.

It is found in the cytoplasm. It functions in the pathway protein degradation; proteasomal Pup-dependent pathway. Its activity is regulated as follows. The formation of the proteasomal ATPase ARC-20S proteasome complex, likely via the docking of the C-termini of ARC into the intersubunit pockets in the alpha-rings, may trigger opening of the gate for substrate entry. Interconversion between the open-gate and close-gate conformations leads to a dynamic regulation of the 20S proteasome proteolysis activity. Functionally, component of the proteasome core, a large protease complex with broad specificity involved in protein degradation. This is Proteasome subunit alpha from Gordonia bronchialis (strain ATCC 25592 / DSM 43247 / BCRC 13721 / JCM 3198 / KCTC 3076 / NBRC 16047 / NCTC 10667) (Rhodococcus bronchialis).